The chain runs to 264 residues: Phosphatidylinositol transfer protein 1 (264 aa).

The interval 151–174 is disordered; it reads NYKETEDPTKIRSEKANRGPLEEE. Positions 238–264 form a coiled coil; sequence VRAFELKTKEDLKKKLEEKDENKAAEK.

This sequence belongs to the PtdIns transfer protein family. PI transfer class I subfamily. Post-translationally, phosphorylated in response to activation of rasG.

The protein localises to the cytoplasm. It localises to the golgi apparatus. In terms of biological role, catalyzes the transfer of PtdIns and phosphatidylcholine between membranes. The chain is Phosphatidylinositol transfer protein 1 (pitA) from Dictyostelium discoideum (Social amoeba).